The primary structure comprises 223 residues: Arginine kinase (223 aa).

In terms of domain architecture, Phosphagen kinase C-terminal spans 56–222 (FVISTRVRLI…LELIKIEKEM (167 aa)). ATP-binding positions include 59–63 (STRVR) and His-68. Position 141 (Cys-141) interacts with L-arginine. Residues 150-154 (RASVH) and 175-180 (RGTRGE) each bind ATP. Position 180 (Glu-180) interacts with L-arginine.

It belongs to the ATP:guanido phosphotransferase family.

The enzyme catalyses L-arginine + ATP = N(omega)-phospho-L-arginine + ADP + H(+). This chain is Arginine kinase, found in Chionoecetes opilio (Atlantic snow crab).